Consider the following 454-residue polypeptide: Ribosomal protein uS12 methylthiotransferase RimO (454 aa).

The MTTase N-terminal domain occupies 9-124; it reads PKIGFVSLGC…VMDAVHLHMP (116 aa). [4Fe-4S] cluster is bound by residues Cys18, Cys54, Cys83, Cys155, Cys159, and Cys162. Residues 141–382 form the Radical SAM core domain; the sequence is LTPKHFAYLK…MLLQEEISKK (242 aa). Residues 385–454 form the TRAM domain; it reads QAKVGKTMRV…ADAHDLWAEA (70 aa).

It belongs to the methylthiotransferase family. RimO subfamily. The cofactor is [4Fe-4S] cluster.

The protein resides in the cytoplasm. The catalysed reaction is L-aspartate(89)-[ribosomal protein uS12]-hydrogen + (sulfur carrier)-SH + AH2 + 2 S-adenosyl-L-methionine = 3-methylsulfanyl-L-aspartate(89)-[ribosomal protein uS12]-hydrogen + (sulfur carrier)-H + 5'-deoxyadenosine + L-methionine + A + S-adenosyl-L-homocysteine + 2 H(+). Catalyzes the methylthiolation of an aspartic acid residue of ribosomal protein uS12. This is Ribosomal protein uS12 methylthiotransferase RimO from Herminiimonas arsenicoxydans.